The primary structure comprises 417 residues: Gap junction alpha-3 protein (417 aa).

The stretch at 2–15 (GDWSFLGRLLENAQ) is an intramembrane region. The Cytoplasmic portion of the chain corresponds to 16–19 (EHST). The helical transmembrane segment at 20–40 (VIGKVWLTVLFIFRILVLGAA) threads the bilayer. Residues 41–71 (AEEVWGDEQSDFTCNTQQPGCENVCYDRAFP) are Extracellular-facing. Cystine bridges form between cysteine 54–cysteine 198, cysteine 61–cysteine 192, and cysteine 65–cysteine 187. A helical membrane pass occupies residues 72 to 92 (ISHIRFWALQIIFVSTPTLIY). Residues 93 to 158 (LGHVLHIVRM…GALLRTYVFN (66 aa)) are Cytoplasmic-facing. Positions 110-128 (EEELLRRDNPQHGRGREPM) are enriched in basic and acidic residues. Residues 110–141 (EEELLRRDNPQHGRGREPMRTGSPRDPPLRDD) form a disordered region. A helical transmembrane segment spans residues 159-179 (IIFKTLFEVGFIAGQYFLYGF). Residues 180–207 (QLQPLYRCDRWPCPNTVDCFISRPTEKT) are Extracellular-facing. Residues 208–228 (IFVIFMLAVACASLVLNMLEI) form a helical membrane-spanning segment. Over 229-417 (YHLGWKKLKQ…GRARPGDLAI (189 aa)) the chain is Cytoplasmic. Disordered regions lie at residues 247–267 (DASE…SSGP) and 334–417 (RQVA…DLAI). The segment covering 342 to 353 (PASKPSSAASSP) has biased composition (low complexity).

Belongs to the connexin family. Alpha-type (group II) subfamily. As to quaternary structure, a hemichannel or connexon is composed of a hexamer of connexins. A functional gap junction is formed by the apposition of two hemichannels. Forms heteromeric channels with GJA8.

The protein resides in the cell membrane. The protein localises to the cell junction. It localises to the gap junction. In terms of biological role, structural component of lens fiber gap junctions. Gap junctions are dodecameric channels that connect the cytoplasm of adjoining cells. They are formed by the docking of two hexameric hemichannels, one from each cell membrane. Small molecules and ions diffuse from one cell to a neighboring cell via the central pore. The protein is Gap junction alpha-3 protein (Gja3) of Mus musculus (Mouse).